The primary structure comprises 329 residues: Eukaryotic translation initiation factor 2 subunit 1 (329 aa).

Positions 24-95 constitute an S1 motif domain; that stretch reads DDLIMVKVNR…QKGYIDLSKR (72 aa). Ser59 carries the post-translational modification Phosphoserine; by eIK1, eIK2 and PK4. Residues 291–329 are disordered; the sequence is LDKHDGISSDDDDYNTSDEDDENSSEEDENTSEDEEEED. The segment covering 298–329 has biased composition (acidic residues); the sequence is SSDDDDYNTSDEDDENSSEEDENTSEDEEEED.

It belongs to the eIF-2-alpha family. Phosphorylated at Ser-59 by eIK1 in response to amino acid starvation. Phosphorylates at Ser-59 in schizonts and gametocytes but not in rings and young trophozoites. Phosphorylates at Ser-59 by eIK2 in salivary gland sporozoites but not in midgut and hemocoel sporozoites. Dephosphorylated at Ser-59 by UIS2. Phosphorylation of eIF2alpha subunit of the pre-initiation complex eIF2 inhibits recycling of inactive eIF2-GDP to active eIF2-GTP by limiting the activity of the guanine nucleotide exchange factor eIF2B and thus, inhibits protein translation.

It is found in the cytoplasm. The protein resides in the stress granule. In terms of biological role, functions in the early steps of protein synthesis by forming a ternary complex with GTP and initiator tRNA. May regulate protein translation in response to amino acid starvation. May regulate protein at various stages of parasite development. The chain is Eukaryotic translation initiation factor 2 subunit 1 from Plasmodium falciparum (isolate 3D7).